Reading from the N-terminus, the 134-residue chain is UPF0412 protein YaaI (134 aa).

Positions 1–23 (MRSVLTISAGLLFGLALSSVAHA) are cleaved as a signal peptide.

The protein belongs to the UPF0412 family.

This Salmonella agona (strain SL483) protein is UPF0412 protein YaaI.